The following is a 101-amino-acid chain: Urease subunit beta (101 aa).

Belongs to the urease beta subunit family. In terms of assembly, heterotrimer of UreA (gamma), UreB (beta) and UreC (alpha) subunits. Three heterotrimers associate to form the active enzyme.

The protein localises to the cytoplasm. It catalyses the reaction urea + 2 H2O + H(+) = hydrogencarbonate + 2 NH4(+). It functions in the pathway nitrogen metabolism; urea degradation; CO(2) and NH(3) from urea (urease route): step 1/1. The protein is Urease subunit beta of Actinobacillus pleuropneumoniae serotype 7 (strain AP76).